A 298-amino-acid chain; its full sequence is Acetyl-coenzyme A carboxylase carboxyl transferase subunit beta (298 aa).

The interval 1–21 (MNQEVKSGKVLSPSTPWTQRP) is disordered. The C4-type zinc finger occupies 20 to 67 (RPVPGIEVADEQQTLKATFTEPTIECPECHALVTRTAISFNAYVCPQC). Residues 41 to 298 (PTIECPECHA…RLVSKLMNLP (258 aa)) form the CoA carboxyltransferase N-terminal domain. Zn(2+) contacts are provided by Cys45, Cys48, Cys64, and Cys67.

The protein belongs to the AccD/PCCB family. Acetyl-CoA carboxylase is a heterohexamer composed of biotin carboxyl carrier protein (AccB), biotin carboxylase (AccC) and two subunits each of ACCase subunit alpha (AccA) and ACCase subunit beta (AccD). Zn(2+) is required as a cofactor.

The protein resides in the cytoplasm. The catalysed reaction is N(6)-carboxybiotinyl-L-lysyl-[protein] + acetyl-CoA = N(6)-biotinyl-L-lysyl-[protein] + malonyl-CoA. It functions in the pathway lipid metabolism; malonyl-CoA biosynthesis; malonyl-CoA from acetyl-CoA: step 1/1. In terms of biological role, component of the acetyl coenzyme A carboxylase (ACC) complex. Biotin carboxylase (BC) catalyzes the carboxylation of biotin on its carrier protein (BCCP) and then the CO(2) group is transferred by the transcarboxylase to acetyl-CoA to form malonyl-CoA. The sequence is that of Acetyl-coenzyme A carboxylase carboxyl transferase subunit beta from Acinetobacter baumannii (strain SDF).